The following is a 331-amino-acid chain: Peroxidase 49 (331 aa).

The first 22 residues, 1–22, serve as a signal peptide directing secretion; sequence MARLTSFLLLLSLICFVPLCLC. 4 cysteine pairs are disulfide-bonded: Cys-39–Cys-119, Cys-72–Cys-77, Cys-125–Cys-326, and Cys-204–Cys-236. The active-site Proton acceptor is the His-70. 5 residues coordinate Ca(2+): Asp-71, Val-74, Gly-76, Asp-78, and Ser-80. Pro-167 contributes to the substrate binding site. N-linked (GlcNAc...) asparagine glycosylation is present at Asn-170. His-197 is a binding site for heme b. Ca(2+) is bound at residue Thr-198. Asn-213 is a glycosylation site (N-linked (GlcNAc...) asparagine). Ca(2+) is bound by residues Asp-249, Ser-252, and Asp-257.

The protein belongs to the peroxidase family. Classical plant (class III) peroxidase subfamily. The cofactor is heme b. Requires Ca(2+) as cofactor.

It is found in the secreted. It carries out the reaction 2 a phenolic donor + H2O2 = 2 a phenolic radical donor + 2 H2O. In terms of biological role, removal of H(2)O(2), oxidation of toxic reductants, biosynthesis and degradation of lignin, suberization, auxin catabolism, response to environmental stresses such as wounding, pathogen attack and oxidative stress. These functions might be dependent on each isozyme/isoform in each plant tissue. The polypeptide is Peroxidase 49 (PER49) (Arabidopsis thaliana (Mouse-ear cress)).